An 82-amino-acid chain; its full sequence is Diptericin-A (82 aa).

2 disordered regions span residues 1–32 (DEKP…DGFG) and 45–69 (DNGG…GNSR). Position 82 is a phenylalanine amide (F82).

Belongs to the attacin/sarcotoxin-2 family.

Its subcellular location is the secreted. Its function is as follows. Antimicrobial peptide required to resist Gram-negative bacterial infections, regulated by Dredd. The protein is Diptericin-A of Protophormia terraenovae (Northern blowfly).